Reading from the N-terminus, the 2412-residue chain is Centrosomal protein of 295 kDa (2412 aa).

A necessary for centriole targeting and microtubule association region spans residues 1 to 540; the sequence is MKRKGMNTKL…KQADQPEVCC (540 aa). S13 carries the post-translational modification Phosphoserine. Coiled-coil stretches lie at residues 63–84, 114–134, 209–273, 489–535, and 563–592; these read AEEL…LEKL, AERK…QKNQ, DAHL…DLAR, RRKQ…QADQ, and HQLL…VLKE. Disordered stretches follow at residues 600-641 and 739-762; these read SALV…YQPV and LDSQ…PSPF. S634 is subject to Phosphoserine. Residues 739–757 are compositionally biased toward polar residues; it reads LDSQQISSEDSENISSKPS. A coiled-coil region spans residues 811–841; sequence AQQGDLRFLQEQLELQKKVLQARQEAREKLL. Disordered regions lie at residues 871-891, 973-1005, 1158-1178, and 1216-1240; these read SASA…ATVS, DTQS…QDGS, LSSP…SVRS, and WVDT…QQTG. 3 stretches are compositionally biased toward polar residues: residues 993–1005, 1158–1176, and 1224–1240; these read PSQS…QDGS, LSSP…SVSV, and FQSS…QQTG. Coiled coils occupy residues 1300–1327 and 1448–1493; these read QQDS…EAHE and QHDD…SKQI. S1573 bears the Phosphoserine mark. 4 disordered regions span residues 1820-1895, 1916-1937, 2028-2048, and 2089-2111; these read LAHD…LSSV, ESFS…EETD, DLSS…SESS, and TEGS…SQHA. Residues 1836–1868 are compositionally biased toward basic and acidic residues; that stretch reads SKSHDDNAEAVKVKKSDVEDHAVLSHAVSKEEA. The span at 1885 to 1895 shows a compositional bias: polar residues; it reads QEISQEPLSSV. A compositionally biased stretch (basic and acidic residues) spans 1921 to 1935; sequence QTEHLEQESTNKQEE. Polar residues predominate over residues 2089–2108; the sequence is TEGSEQSFQQLRPEFSSQES. The interval 2367–2412 is ALMS motif; that stretch reads SLQEAFMTRQTLTERSYQRQREIWNKTRLPQTKVSKEKLPTGCTGS.

Interacts (via ALMS motif) with microtubules; this interaction is direct.

Its subcellular location is the cytoplasm. It localises to the cytoskeleton. It is found in the microtubule organizing center. The protein localises to the centrosome. The protein resides in the centriole. Its subcellular location is the spindle. Functionally, centriole-enriched microtubule-binding protein involved in centriole biogenesis. Essential for the generation of the distal portion of new-born centrioles in a CPAP- and CEP120-mediated elongation dependent manner during the cell cycle S/G2 phase after formation of the initiating cartwheel structure. Required for the recruitment of centriolar proteins, such as POC1B, POC5 and CEP135, into the distal portion of centrioles. Also required for centriole-to-centrosome conversion during mitotic progression, but is dispensable for cartwheel removal or centriole disengagement. Binds to and stabilizes centriolar microtubule. May be involved in ciliogenesis. The sequence is that of Centrosomal protein of 295 kDa from Mus musculus (Mouse).